A 376-amino-acid chain; its full sequence is tRNA-specific 2-thiouridylase MnmA (376 aa).

ATP-binding positions include 14-21 (GMSGGVDS) and Met40. Positions 100–102 (NPD) are interaction with target base in tRNA. Residue Cys105 is the Nucleophile of the active site. Cysteines 105 and 202 form a disulfide. Position 129 (Gly129) interacts with ATP. Positions 152-154 (KDQ) are interaction with tRNA. The active-site Cysteine persulfide intermediate is the Cys202. The segment at 315–316 (RY) is interaction with tRNA.

It belongs to the MnmA/TRMU family.

It localises to the cytoplasm. The catalysed reaction is S-sulfanyl-L-cysteinyl-[protein] + uridine(34) in tRNA + AH2 + ATP = 2-thiouridine(34) in tRNA + L-cysteinyl-[protein] + A + AMP + diphosphate + H(+). Catalyzes the 2-thiolation of uridine at the wobble position (U34) of tRNA, leading to the formation of s(2)U34. The protein is tRNA-specific 2-thiouridylase MnmA of Lactococcus lactis subsp. lactis (strain IL1403) (Streptococcus lactis).